The primary structure comprises 122 residues: Large ribosomal subunit protein uL18 (122 aa).

The protein belongs to the universal ribosomal protein uL18 family. Part of the 50S ribosomal subunit; part of the 5S rRNA/L5/L18/L25 subcomplex. Contacts the 5S and 23S rRNAs.

This is one of the proteins that bind and probably mediate the attachment of the 5S RNA into the large ribosomal subunit, where it forms part of the central protuberance. The sequence is that of Large ribosomal subunit protein uL18 from Agathobacter rectalis (strain ATCC 33656 / DSM 3377 / JCM 17463 / KCTC 5835 / VPI 0990) (Eubacterium rectale).